A 336-amino-acid polypeptide reads, in one-letter code: HTH-type transcriptional regulator AscG (336 aa).

The HTH lacI-type domain occupies 2–56; sequence TTMLEVAKRAGVSKATVSRVLSGNGYVSQETKDRVFQAVEESGYRPNLLARNLSA. The H-T-H motif DNA-binding region spans 4–23; sequence MLEVAKRAGVSKATVSRVLS.

Its function is as follows. Repressor of the asc operon. The cryptic operon is activated by the insertion of IS186 into the ascG gene. This is HTH-type transcriptional regulator AscG (ascG) from Escherichia coli (strain K12).